The sequence spans 82 residues: Metallothionein (82 aa).

Cd(2+) is bound by residues Cys6, Cys8, Cys11, Cys13, Cys29, Cys33, His37, Cys43, Cys48, and Cys50. Residues Cys6, Cys8, and Cys11 each coordinate Zn(2+). Zn(2+) contacts are provided by Cys29, Cys33, His37, Cys43, Cys48, and Cys50. The tract at residues Ile61 to Pro82 is disordered.

It belongs to the metallothionein superfamily.

Metallothioneins are small proteins that have a high content of cysteine residues which allow them to bind heavy metal ions through clusters of thiolate bonds. Preferentially, binds four Cd(2+) ions. Also binds three Zn(2+) ions but with less affinity. Required for long-term viability. May play a role in the storage or sequestration of metals when present in excess. This chain is Metallothionein, found in Pseudomonas fluorescens (strain Q2-87).